The sequence spans 93 residues: UPF0367 protein gsr3177 (93 aa).

This sequence belongs to the UPF0367 family.

This is UPF0367 protein gsr3177 from Gloeobacter violaceus (strain ATCC 29082 / PCC 7421).